Here is a 271-residue protein sequence, read N- to C-terminus: Tryptophan synthase alpha chain (271 aa).

Residues Glu-56 and Asp-67 each act as proton acceptor in the active site.

The protein belongs to the TrpA family. Tetramer of two alpha and two beta chains.

The enzyme catalyses (1S,2R)-1-C-(indol-3-yl)glycerol 3-phosphate + L-serine = D-glyceraldehyde 3-phosphate + L-tryptophan + H2O. The protein operates within amino-acid biosynthesis; L-tryptophan biosynthesis; L-tryptophan from chorismate: step 5/5. The alpha subunit is responsible for the aldol cleavage of indoleglycerol phosphate to indole and glyceraldehyde 3-phosphate. In Mycolicibacterium paratuberculosis (strain ATCC BAA-968 / K-10) (Mycobacterium paratuberculosis), this protein is Tryptophan synthase alpha chain.